A 114-amino-acid polypeptide reads, in one-letter code: T cell receptor beta variable 10-2 (114 aa).

A signal peptide spans 1–21 (MGTRLFFYVALCLLWAGHRDA). One can recognise an Ig-like domain in the interval 22–114 (GITQSPRYKI…TSVYFCASSE (93 aa)). Cys42 and Cys110 form a disulfide bridge.

Alpha-beta TR is a heterodimer composed of an alpha and beta chain; disulfide-linked. The alpha-beta TR is associated with the transmembrane signaling CD3 coreceptor proteins to form the TR-CD3 (TcR or TCR). The assembly of alpha-beta TR heterodimers with CD3 occurs in the endoplasmic reticulum where a single alpha-beta TR heterodimer associates with one CD3D-CD3E heterodimer, one CD3G-CD3E heterodimer and one CD247 homodimer forming a stable octameric structure. CD3D-CD3E and CD3G-CD3E heterodimers preferentially associate with TR alpha and TR beta chains, respectively. The association of the CD247 homodimer is the last step of TcR assembly in the endoplasmic reticulum and is required for transport to the cell surface.

Its subcellular location is the cell membrane. Its function is as follows. V region of the variable domain of T cell receptor (TR) beta chain that participates in the antigen recognition. Alpha-beta T cell receptors are antigen specific receptors which are essential to the immune response and are present on the cell surface of T lymphocytes. Recognize peptide-major histocompatibility (MH) (pMH) complexes that are displayed by antigen presenting cells (APC), a prerequisite for efficient T cell adaptive immunity against pathogens. Binding of alpha-beta TR to pMH complex initiates TR-CD3 clustering on the cell surface and intracellular activation of LCK that phosphorylates the ITAM motifs of CD3G, CD3D, CD3E and CD247 enabling the recruitment of ZAP70. In turn ZAP70 phosphorylates LAT, which recruits numerous signaling molecules to form the LAT signalosome. The LAT signalosome propagates signal branching to three major signaling pathways, the calcium, the mitogen-activated protein kinase (MAPK) kinase and the nuclear factor NF-kappa-B (NF-kB) pathways, leading to the mobilization of transcription factors that are critical for gene expression and essential for T cell growth and differentiation. The T cell repertoire is generated in the thymus, by V-(D)-J rearrangement. This repertoire is then shaped by intrathymic selection events to generate a peripheral T cell pool of self-MH restricted, non-autoaggressive T cells. Post-thymic interaction of alpha-beta TR with the pMH complexes shapes TR structural and functional avidity. The polypeptide is T cell receptor beta variable 10-2 (Homo sapiens (Human)).